A 466-amino-acid chain; its full sequence is Asparagine--tRNA ligase (466 aa).

The protein belongs to the class-II aminoacyl-tRNA synthetase family. In terms of assembly, homodimer.

It localises to the cytoplasm. The catalysed reaction is tRNA(Asn) + L-asparagine + ATP = L-asparaginyl-tRNA(Asn) + AMP + diphosphate + H(+). This is Asparagine--tRNA ligase from Escherichia coli O157:H7.